The following is a 291-amino-acid chain: MAEITASMVKELRERTDAPMMDCKKALTEAEGDMARAEEILRVRFGNKASKAAGRVAAEGVVAVSIKADGKLGAIVEINSETDFCAKNADFLAFVAQVAEAAATEKPADVAALSALKIDGGSVEDIRTQLIGKIGENITVRRFAVTEAKGKLVSYVHGGKIGVLVDLVGGDETLGKDIAMHIAAAKPKSLDASGIPAELIEAERRVAIEKAKEAGKPEAMLDKIADGTVQKFLKEVTLLSQPFVKDDKQTIEQLLKANNASIASFTMYVVGEGIEKVVTDFAAEVAAAAKV.

Positions 82-85 (TDFC) are involved in Mg(2+) ion dislocation from EF-Tu.

Belongs to the EF-Ts family.

It is found in the cytoplasm. In terms of biological role, associates with the EF-Tu.GDP complex and induces the exchange of GDP to GTP. It remains bound to the aminoacyl-tRNA.EF-Tu.GTP complex up to the GTP hydrolysis stage on the ribosome. This chain is Elongation factor Ts, found in Methylobacillus flagellatus (strain ATCC 51484 / DSM 6875 / VKM B-1610 / KT).